Here is a 455-residue protein sequence, read N- to C-terminus: Pup--protein ligase (455 aa).

Glu-12 is a binding site for Mg(2+). Arg-56 contacts ATP. Tyr-58 lines the Mg(2+) pocket. The active-site Proton acceptor is the Asp-60. Position 66 (Glu-66) interacts with Mg(2+). Residues Thr-69 and Trp-422 each coordinate ATP.

The protein belongs to the Pup ligase/Pup deamidase family. Pup-conjugating enzyme subfamily.

The enzyme catalyses ATP + [prokaryotic ubiquitin-like protein]-L-glutamate + [protein]-L-lysine = ADP + phosphate + N(6)-([prokaryotic ubiquitin-like protein]-gamma-L-glutamyl)-[protein]-L-lysine.. It functions in the pathway protein degradation; proteasomal Pup-dependent pathway. The protein operates within protein modification; protein pupylation. Functionally, catalyzes the covalent attachment of the prokaryotic ubiquitin-like protein modifier Pup to the proteasomal substrate proteins, thereby targeting them for proteasomal degradation. This tagging system is termed pupylation. The ligation reaction involves the side-chain carboxylate of the C-terminal glutamate of Pup and the side-chain amino group of a substrate lysine. This Acidimicrobium ferrooxidans (strain DSM 10331 / JCM 15462 / NBRC 103882 / ICP) protein is Pup--protein ligase.